The chain runs to 476 residues: Inosine-5'-monophosphate dehydrogenase (476 aa).

2 CBS domains span residues 92 to 150 (MIEN…IADV) and 151 to 207 (MTKD…PNAS). NAD(+) contacts are provided by residues D244 and 294–296 (GVG). K(+)-binding residues include G296 and G298. Position 299 (S299) interacts with IMP. C301 lines the K(+) pocket. Residue C301 is the Thioimidate intermediate of the active site. IMP is bound by residues 334–336 (DGG), 357–358 (GS), 381–385 (YRGMA), and E413. K(+) is bound by residues E467 and S468.

This sequence belongs to the IMPDH/GMPR family. As to quaternary structure, homotetramer. K(+) serves as cofactor.

The enzyme catalyses IMP + NAD(+) + H2O = XMP + NADH + H(+). The protein operates within purine metabolism; XMP biosynthesis via de novo pathway; XMP from IMP: step 1/1. With respect to regulation, mycophenolic acid (MPA) is a non-competitive inhibitor that prevents formation of the closed enzyme conformation by binding to the same site as the amobile flap. In contrast, mizoribine monophosphate (MZP) is a competitive inhibitor that induces the closed conformation. MPA is a potent inhibitor of mammalian IMPDHs but a poor inhibitor of the bacterial enzymes. MZP is a more potent inhibitor of bacterial IMPDH. Its function is as follows. Catalyzes the conversion of inosine 5'-phosphate (IMP) to xanthosine 5'-phosphate (XMP), the first committed and rate-limiting step in the de novo synthesis of guanine nucleotides, and therefore plays an important role in the regulation of cell growth. This Nitrosopumilus maritimus (strain SCM1) protein is Inosine-5'-monophosphate dehydrogenase.